The sequence spans 290 residues: Bifunctional protein FolD (290 aa).

NADP(+) is bound by residues 167 to 169, serine 192, and isoleucine 233; that span reads GRS.

It belongs to the tetrahydrofolate dehydrogenase/cyclohydrolase family. As to quaternary structure, homodimer.

It catalyses the reaction (6R)-5,10-methylene-5,6,7,8-tetrahydrofolate + NADP(+) = (6R)-5,10-methenyltetrahydrofolate + NADPH. The enzyme catalyses (6R)-5,10-methenyltetrahydrofolate + H2O = (6R)-10-formyltetrahydrofolate + H(+). It functions in the pathway one-carbon metabolism; tetrahydrofolate interconversion. Functionally, catalyzes the oxidation of 5,10-methylenetetrahydrofolate to 5,10-methenyltetrahydrofolate and then the hydrolysis of 5,10-methenyltetrahydrofolate to 10-formyltetrahydrofolate. The chain is Bifunctional protein FolD from Azorhizobium caulinodans (strain ATCC 43989 / DSM 5975 / JCM 20966 / LMG 6465 / NBRC 14845 / NCIMB 13405 / ORS 571).